Here is a 71-residue protein sequence, read N- to C-terminus: General transcription factor IIH subunit 5 (71 aa).

Thr69 carries the phosphothreonine modification.

It belongs to the TFB5 family. As to quaternary structure, component of the 7-subunit TFIIH core complex composed of XPB/ERCC3, XPD/ERCC2, GTF2H1, GTF2H2, GTF2H3, GTF2H4 and GTF2H5, which is active in NER. The core complex associates with the 3-subunit CDK-activating kinase (CAK) module composed of CCNH/cyclin H, CDK7 and MNAT1 to form the 10-subunit holoenzyme (holo-TFIIH) active in transcription. Part of TBP-based Pol II pre-initiation complex (PIC), in which Pol II core assembles with general transcription factors and other specific initiation factors including GTF2E1, GTF2E2, GTF2F1, GTF2F2, TCEA1, ERCC2, ERCC3, GTF2H2, GTF2H3, GTF2H4, GTF2H5, GTF2A1, GTF2A2, GTF2B and TBP; this large multi-subunit PIC complex mediates DNA unwinding and targets Pol II core to the transcription start site where the first phosphodiester bond forms.

Its subcellular location is the nucleus. It localises to the cytoplasm. Component of the general transcription and DNA repair factor IIH (TFIIH) core complex, which is involved in general and transcription-coupled nucleotide excision repair (NER) of damaged DNA and, when complexed to CAK, in RNA transcription by RNA polymerase II. In NER, TFIIH acts by opening DNA around the lesion to allow the excision of the damaged oligonucleotide and its replacement by a new DNA fragment. In transcription, TFIIH has an essential role in transcription initiation. When the pre-initiation complex (PIC) has been established, TFIIH is required for promoter opening and promoter escape. Phosphorylation of the C-terminal tail (CTD) of the largest subunit of RNA polymerase II by the kinase module CAK controls the initiation of transcription. Necessary for the stability of the TFIIH complex and for the presence of normal levels of TFIIH in the cell. This Homo sapiens (Human) protein is General transcription factor IIH subunit 5.